The primary structure comprises 348 residues: Putative [LysW]-L-2-aminoadipate/[LysW]-L-glutamate phosphate reductase (348 aa).

9 to 12 is a binding site for NADP(+); that stretch reads SGYV. Cys-149 is a catalytic residue. Asn-315 lines the NADP(+) pocket.

The protein belongs to the NAGSA dehydrogenase family. Type 1 subfamily. LysY sub-subfamily.

It is found in the cytoplasm. It carries out the reaction [amino-group carrier protein]-C-terminal-N-(1-carboxy-5-oxopentan-1-yl)-L-glutamine + phosphate + NADP(+) = [amino-group carrier protein]-C-terminal-N-(1-carboxy-5-phosphooxy-5-oxopentan-1-yl)-L-glutamine + NADPH + H(+). The enzyme catalyses [amino-group carrier protein]-C-terminal-gamma-(L-glutamyl-5-semialdehyde)-L-glutamate + phosphate + NADP(+) = [amino-group carrier protein]-C-terminal-gamma-(5-phospho-L-glutamyl)-L-glutamate + NADPH + H(+). The protein operates within amino-acid biosynthesis; L-lysine biosynthesis via AAA pathway; L-lysine from L-alpha-aminoadipate (Thermus route): step 3/5. It functions in the pathway amino-acid biosynthesis; L-arginine biosynthesis. Functionally, involved in both the arginine and lysine biosynthetic pathways. This is Putative [LysW]-L-2-aminoadipate/[LysW]-L-glutamate phosphate reductase from Cenarchaeum symbiosum (strain A).